The primary structure comprises 177 residues: Large ribosomal subunit protein uL6 (177 aa).

This sequence belongs to the universal ribosomal protein uL6 family. Part of the 50S ribosomal subunit.

Its function is as follows. This protein binds to the 23S rRNA, and is important in its secondary structure. It is located near the subunit interface in the base of the L7/L12 stalk, and near the tRNA binding site of the peptidyltransferase center. The chain is Large ribosomal subunit protein uL6 from Methanosarcina barkeri (strain Fusaro / DSM 804).